A 227-amino-acid polypeptide reads, in one-letter code: Eukaryotic translation initiation factor 4E-1 (227 aa).

A disordered region spans residues 1–52 (MAEEHETRPPSAGRPPSSGRGRADDADEREEGEIADDDSGHAPPQANPAAPH). A compositionally biased stretch (low complexity) spans 9-20 (PPSAGRPPSSGR). Positions 25 to 37 (DADEREEGEIADD) are enriched in acidic residues. EIF4G-binding regions lie at residues 52-55 (HPLE) and 62-98 (FDNP…NNIH). Residues 70–75 (KQATWG), Lys-102, and 120–121 (WE) each bind mRNA. Cys-125 and Cys-163 are oxidised to a cystine. The interval 146–155 (HTLLAMIGEQ) is EIF4G-binding. Residues 170 to 175 (RGKQER) and 215 to 219 (KKMDK) each bind mRNA.

The protein belongs to the eukaryotic initiation factor 4E family. EIF4F is a multi-subunit complex, the composition of which varies with external and internal environmental conditions. It is composed of at least EIF4A, EIF4E and EIF4G. EIF4E is also known to interact with other partners. In higher plants two isoforms of EIF4F have been identified, named isoform EIF4F and isoform EIF(iso)4F. Isoform EIF4F has subunits p220 and p26, whereas isoform EIF(iso)4F has subunits p82 and p28. Post-translationally, according to the redox status, the Cys-125-Cys-163 disulfide bridge may have a role in regulating protein function by affecting its ability to bind capped mRNA.

It localises to the nucleus. Its subcellular location is the cytoplasm. In terms of biological role, component of the protein complex eIF4F, which is involved in the recognition of the mRNA cap, ATP-dependent unwinding of 5'-terminal secondary structure and recruitment of mRNA to the ribosome. Recognizes and binds the 7-methylguanosine-containing mRNA cap during an early step in the initiation of protein synthesis and facilitates ribosome binding by inducing the unwinding of the mRNAs secondary structures. The sequence is that of Eukaryotic translation initiation factor 4E-1 from Oryza sativa subsp. japonica (Rice).